A 639-amino-acid chain; its full sequence is Probable serine/threonine-protein kinase DDB_G0282777 (639 aa).

Residues 7-122 adopt a coiled-coil conformation; that stretch reads LKENKESLKD…EDLKSIILTS (116 aa). The Protein kinase domain maps to 233–588; that stretch reads MHMVGDIKKG…SNNNQNHTNI (356 aa). ATP is bound by residues 239–247 and Lys-284; that span reads IKKGSISSD. Residue Asp-439 is the Proton acceptor of the active site. Residues 601 to 639 are disordered; it reads NTLETSTTNPNTNTTTSDTNTSTTSTTNTNTTTSNTITA.

It belongs to the protein kinase superfamily. Ser/Thr protein kinase family.

The enzyme catalyses L-seryl-[protein] + ATP = O-phospho-L-seryl-[protein] + ADP + H(+). It catalyses the reaction L-threonyl-[protein] + ATP = O-phospho-L-threonyl-[protein] + ADP + H(+). This chain is Probable serine/threonine-protein kinase DDB_G0282777, found in Dictyostelium discoideum (Social amoeba).